The primary structure comprises 76 residues: Histone acetyltransferase (76 aa).

In terms of assembly, physically interacts with histone H3 in infected macrophages.

It localises to the secreted. The protein resides in the host cytoplasm. The protein localises to the host nucleus. It carries out the reaction L-lysyl-[protein] + acetyl-CoA = N(6)-acetyl-L-lysyl-[protein] + CoA + H(+). Its activity is regulated as follows. Is completely inhibited by anacardic acid, an inhibitor of HAT activity. Its function is as follows. Histone acetyltransferase, which by binding to the host chromatin, may manipulate the expression of host genes involved in anti-inflammatory responses to evade clearance and to survive in the intracellular milieu. Acetylates histone H3 at the 'Lys-9' and 'Lys-14' positions. The sequence is that of Histone acetyltransferase from Mycobacterium tuberculosis (strain CDC 1551 / Oshkosh).